Consider the following 511-residue polypeptide: Phosphoenolpyruvate carboxylase (511 aa).

This sequence belongs to the PEPCase type 2 family. In terms of assembly, homotetramer. Mg(2+) is required as a cofactor.

The enzyme catalyses oxaloacetate + phosphate = phosphoenolpyruvate + hydrogencarbonate. Catalyzes the irreversible beta-carboxylation of phosphoenolpyruvate (PEP) to form oxaloacetate (OAA), a four-carbon dicarboxylic acid source for the tricarboxylic acid cycle. The polypeptide is Phosphoenolpyruvate carboxylase (Saccharolobus islandicus (strain M.16.27) (Sulfolobus islandicus)).